The primary structure comprises 463 residues: tRNA dimethylallyltransferase 9 (463 aa).

Residue 57 to 64 coordinates ATP; sequence GPTGAGKS. 59–64 lines the substrate pocket; it reads TGAGKS. The tract at residues 82-85 is interaction with substrate tRNA; it reads DSVQ.

The protein belongs to the IPP transferase family. Requires Mg(2+) as cofactor. Expressed ubiquitously, with highest expression in proliferating tissues.

The protein resides in the cytoplasm. The enzyme catalyses adenosine(37) in tRNA + dimethylallyl diphosphate = N(6)-dimethylallyladenosine(37) in tRNA + diphosphate. Its function is as follows. Catalyzes the transfer of a dimethylallyl group onto the adenine at position 37 in tRNAs that read codons beginning with uridine, leading to the formation of N6-(dimethylallyl)adenosine (i(6)A). Involved in the cis-type cytokinin biosynthesis. This chain is tRNA dimethylallyltransferase 9 (IPT9), found in Arabidopsis thaliana (Mouse-ear cress).